Consider the following 162-residue polypeptide: Ubiquitin-fold modifier-conjugating enzyme 1 (162 aa).

The active-site Glycyl thioester intermediate is the cysteine 115.

It belongs to the ubiquitin-conjugating enzyme family. UFC1 subfamily. As to quaternary structure, interacts with uba-5. As to expression, expressed in the intestine.

Its function is as follows. E2-like enzyme which forms an intermediate with ufm-1. The intermediate is formed via a thioester linkage. The chain is Ubiquitin-fold modifier-conjugating enzyme 1 from Caenorhabditis elegans.